The chain runs to 224 residues: MLLRQYINVPRLGEIMNLKELTVILIIPIVYLGVCGCFEIVPKSFYDNFSSYNVGDKAPFGEWKVKEGGFKIEAILSEDKKTLNKVAVPINNGIIYIDKNYTDFKFIVDIKRLEESDSPKIYFRLINNANAGYYIDIEGFDRGYVLYKFNGTKVEKLAESYDAAPAGTDFYRYEVVAKDNKIIFLAGGQKYIEYTDNNTPILKGGIGIGGGRAYYDNVRVEPIE.

A helical membrane pass occupies residues 21–41 (LTVILIIPIVYLGVCGCFEIV).

The protein resides in the membrane. This is an uncharacterized protein from Methanocaldococcus jannaschii (strain ATCC 43067 / DSM 2661 / JAL-1 / JCM 10045 / NBRC 100440) (Methanococcus jannaschii).